The sequence spans 502 residues: MRAMTEGLEMHDLLAVRRDKLNQLYDEGINPFGGKFERTHTSNEVIEQFAAFTKEELEEKDDHVVLAGRLMTKRGKGKAGFAHIQDIGGQIQIYVRQDAVGEEAYGLFKSLDIGDMVGVGGRPFKTKVGEMSVKVTELVILGKSLRPLPDKYHGLKDVEQRYRQRYLDLITSPESRTAFITRSKIIQVMRRYLDEKGFLEVETPMMHSIPGGASARPFVTHHNTLDMELYMRIAIELHLKRLIVGGLEKVYEIGRVFRNEGISTRHNPEFTMIELYEAYADYHDIMELTEGVIAHIAKEVLGTTTVQYGEHTVELAPSWKRVHMVDAIKEKTGVDFWQQMSDGEARALAKEHGVPVKETMTFGHVVNEFFEHFIEETLIQPTFVYGHPLAISPLAKKNEEDPRFTDRFELFIVGREHANAFSELNDPIDQRKRFEAQLIEREQGDDEAHRMDEDFIEALEYGMPPTGGLGIGIDRLVMLLTNSPSIRDVILFPQMRNREQGE.

Mg(2+) is bound by residues E409 and E416.

The protein belongs to the class-II aminoacyl-tRNA synthetase family. Homodimer. It depends on Mg(2+) as a cofactor.

Its subcellular location is the cytoplasm. It catalyses the reaction tRNA(Lys) + L-lysine + ATP = L-lysyl-tRNA(Lys) + AMP + diphosphate. In Shouchella clausii (strain KSM-K16) (Alkalihalobacillus clausii), this protein is Lysine--tRNA ligase.